The chain runs to 598 residues: MFS siderochrome iron transporter D (598 aa).

The disordered stretch occupies residues 1–34; that stretch reads MLSSWQKKFFQTPEHPPAEGIAPPRDDGVPNPEP. The Cytoplasmic portion of the chain corresponds to 1–76; sequence MLSSWQKKFF…AEAITLTWSK (76 aa). A helical membrane pass occupies residues 77–97; that stretch reads ISLGAAYFLMWLLYLVNGFQA. The Extracellular portion of the chain corresponds to 98–115; that stretch reads SITGNLSAYVTSGFESHS. N-linked (GlcNAc...) asparagine glycosylation is present at asparagine 102. A helical transmembrane segment spans residues 116–136; the sequence is LIPVISIVSSVMSAATYMPLA. At 137-144 the chain is on the cytoplasmic side; the sequence is KVLNLWDR. Residues 145-165 form a helical membrane-spanning segment; that stretch reads SIGFIIMVAFATLGLILSATC. The Extracellular portion of the chain corresponds to 166 to 171; it reads HDIGTY. The chain crosses the membrane as a helical span at residues 172–192; the sequence is CAAQVFYSIGFAGIIFSVDVI. The Cytoplasmic portion of the chain corresponds to 193–203; it reads TADTSTLRDRG. Residues 204 to 224 form a helical membrane-spanning segment; it reads LAYAFTSSPYIITAFGGPAAA. Residues 225-233 are Extracellular-facing; sequence EHFYDSNWR. A helical transmembrane segment spans residues 234–254; that stretch reads WAYGCFSIVLPVVALPMFCLL. The Cytoplasmic segment spans residues 255-289; that stretch reads RWNRHKAKKSGLLKDKADSGRTWMESIRHYIIEFD. The chain crosses the membrane as a helical span at residues 290–310; the sequence is ILGVFFLAAGLVLFLLPFSIA. Over 311–318 the chain is Extracellular; sequence GSTEDDWK. A helical transmembrane segment spans residues 319–339; that stretch reads SASIITMLVIGFVCLLVFALV. Residues 340-341 lie on the Cytoplasmic side of the membrane; it reads ER. A helical membrane pass occupies residues 342-362; the sequence is FVAPVPFLPWALLASRTVLGA. At 363 to 396 the chain is on the extracellular side; that stretch reads CMLDVCYQIAYYCWFNYYTSYLQVVYGTSITTAG. A helical transmembrane segment spans residues 397–417; it reads YITSIFDVVSGVWLFIVGFLI. Residues 418-424 are Cytoplasmic-facing; it reads KKTNRFR. Residues 425–445 form a helical membrane-spanning segment; it reads WLLFIAVPLYILGVGLMIYFR. Residues 446–450 are Extracellular-facing; sequence KPSWS. A helical membrane pass occupies residues 451 to 471; the sequence is VGYMIMCQIFIAFAGGTMIIC. The Cytoplasmic portion of the chain corresponds to 472–490; it reads QQVAVLAASDHDHAASSLA. Residues 491-511 form a helical membrane-spanning segment; it reads FLNVFGTMGSAVGSSISGAIW. Topologically, residues 512-562 are extracellular; the sequence is THTLPGALQRLLPDSVKADWQTIYDSLEEQLSYERGTLIRQAIALAYASTQ. Residues 563 to 583 traverse the membrane as a helical segment; sequence SKMLIAGTAIMALSLVWMFVI. The Cytoplasmic segment spans residues 584–598; sequence RDIKLTKTQTKGVLF.

Belongs to the major facilitator superfamily.

The protein resides in the cell membrane. Major facilitator transporter involved in fusarinine C (FsC) uptake. In contrast to TAFC-mediated iron uptake, FsC-mediated iron uptake via mirD does not play a significant role during infection. This chain is MFS siderochrome iron transporter D, found in Aspergillus fumigatus (strain ATCC MYA-4609 / CBS 101355 / FGSC A1100 / Af293) (Neosartorya fumigata).